A 1974-amino-acid polypeptide reads, in one-letter code: Protein Ycf2 (1974 aa).

Positions 219–246 (SQLKGSSYQSRDHLDSISNEDSEYHNQR) are disordered. An ATP-binding site is contributed by 1308 to 1315 (GSIGTGRS).

Belongs to the Ycf2 family.

It is found in the plastid. Its subcellular location is the chloroplast stroma. Its function is as follows. Probable ATPase of unknown function. Its presence in a non-photosynthetic plant (Epifagus virginiana) and experiments in tobacco indicate that it has an essential function which is probably not related to photosynthesis. The chain is Protein Ycf2 from Jasminum nudiflorum (Winter jasmine).